A 146-amino-acid polypeptide reads, in one-letter code: Cell division protein SepF (146 aa).

The protein belongs to the SepF family. In terms of assembly, homodimer. Interacts with FtsZ.

The protein localises to the cytoplasm. Functionally, cell division protein that is part of the divisome complex and is recruited early to the Z-ring. Probably stimulates Z-ring formation, perhaps through the cross-linking of FtsZ protofilaments. Its function overlaps with FtsA. In Alkaliphilus oremlandii (strain OhILAs) (Clostridium oremlandii (strain OhILAs)), this protein is Cell division protein SepF.